A 238-amino-acid polypeptide reads, in one-letter code: Ribosomal RNA small subunit methyltransferase G (238 aa).

S-adenosyl-L-methionine contacts are provided by residues glycine 77, phenylalanine 82, 128–129 (AE), and arginine 147. The tract at residues 219–238 (KKTPARYPRKPGTPNKQPIQ) is disordered.

The protein belongs to the methyltransferase superfamily. RNA methyltransferase RsmG family.

It is found in the cytoplasm. Functionally, specifically methylates the N7 position of guanine in position 535 of 16S rRNA. In Geobacillus thermodenitrificans (strain NG80-2), this protein is Ribosomal RNA small subunit methyltransferase G.